A 298-amino-acid chain; its full sequence is Homoserine kinase (298 aa).

Position 92 to 102 (Pro92 to Thr102) interacts with ATP.

The protein belongs to the GHMP kinase family. Homoserine kinase subfamily.

It localises to the cytoplasm. It catalyses the reaction L-homoserine + ATP = O-phospho-L-homoserine + ADP + H(+). It functions in the pathway amino-acid biosynthesis; L-threonine biosynthesis; L-threonine from L-aspartate: step 4/5. Catalyzes the ATP-dependent phosphorylation of L-homoserine to L-homoserine phosphate. The protein is Homoserine kinase (thrB) of Nostoc sp. (strain PCC 7120 / SAG 25.82 / UTEX 2576).